The chain runs to 140 residues: uncharacterized protein (140 aa).

Belongs to the SufE family.

This is an uncharacterized protein from Rhizobium meliloti (strain 1021) (Ensifer meliloti).